The primary structure comprises 195 residues: CASP-like protein IN26 (195 aa).

At 1–26 the chain is on the cytoplasmic side; the sequence is VAPTGSVETEKAGPSYKPKEYYKVTE. The chain crosses the membrane as a helical span at residues 27–47; it reads AILRLLLLASLVVAVVVMVTS. Topologically, residues 48–75 are extracellular; sequence KETELISVKLDPFPPFMLPLTAKFTQSP. A helical transmembrane segment spans residues 76–96; that stretch reads AFIYFVAGLSVAGLYTIISTL. At 97–120 the chain is on the cytoplasmic side; that stretch reads ASFYNLLIKPGFCPALVSHFIILD. Residues 121-143 form a helical membrane-spanning segment; it reads VVMLGIVGTATGAAGGVAYIGLK. The Extracellular segment spans residues 144–163; that stretch reads GNSHVGWTKVCNKYGKLCTH. The helical transmembrane segment at 164-184 threads the bilayer; the sequence is LGASLAVSFFAFIVLLLLIIL. Topologically, residues 185–195 are cytoplasmic; the sequence is SIHSLSKKIPK.

The protein belongs to the Casparian strip membrane proteins (CASP) family. As to quaternary structure, homodimer and heterodimers.

The protein localises to the cell membrane. This chain is CASP-like protein IN26 (IN26), found in Ipomoea nil (Japanese morning glory).